Consider the following 141-residue polypeptide: Endoribonuclease YbeY (141 aa).

Residues His105, His109, and Asp115 each coordinate Zn(2+).

Belongs to the endoribonuclease YbeY family. It depends on Zn(2+) as a cofactor.

Its subcellular location is the cytoplasm. Its function is as follows. Single strand-specific metallo-endoribonuclease involved in late-stage 70S ribosome quality control and in maturation of the 3' terminus of the 16S rRNA. The chain is Endoribonuclease YbeY from Karelsulcia muelleri (strain GWSS) (Sulcia muelleri).